Here is a 204-residue protein sequence, read N- to C-terminus: Outer-membrane lipoprotein carrier protein (204 aa).

Residues 1-21 form the signal peptide; it reads MKKIAVTCALLSAFAVSSVWA. Residues 169–204 are disordered; it reads QRSSYQLKSQQNGAVDMSKFTFTPPQGVTVDDQRNK. Residues 171-181 show a composition bias toward polar residues; it reads SSYQLKSQQNG.

This sequence belongs to the LolA family. As to quaternary structure, monomer.

It localises to the periplasm. In terms of biological role, participates in the translocation of lipoproteins from the inner membrane to the outer membrane. Only forms a complex with a lipoprotein if the residue after the N-terminal Cys is not an aspartate (The Asp acts as a targeting signal to indicate that the lipoprotein should stay in the inner membrane). This chain is Outer-membrane lipoprotein carrier protein, found in Cronobacter sakazakii (strain ATCC BAA-894) (Enterobacter sakazakii).